The following is a 299-amino-acid chain: Regucalcin (299 aa).

Glu18 contacts a divalent metal cation. Substrate contacts are provided by Arg101, Asn103, and Glu121. Position 144 is an N6-succinyllysine (Lys144). Residues Asn154 and Asp204 each coordinate a divalent metal cation. Catalysis depends on Asp204, which acts as the Proton donor/acceptor. Residues Lys244 and Lys253 each carry the N6-succinyllysine modification.

The protein belongs to the SMP-30/CGR1 family. As to quaternary structure, monomer. It depends on Zn(2+) as a cofactor. Mn(2+) is required as a cofactor. Ca(2+) serves as cofactor. The cofactor is Mg(2+).

Its subcellular location is the cytoplasm. The enzyme catalyses D-glucono-1,5-lactone + H2O = D-gluconate + H(+). The protein operates within cofactor biosynthesis; L-ascorbate biosynthesis via UDP-alpha-D-glucuronate pathway; L-ascorbate from UDP-alpha-D-glucuronate: step 3/4. In terms of biological role, gluconolactonase with low activity towards other sugar lactones, including gulonolactone and galactonolactone. Catalyzes a key step in ascorbic acid (vitamin C) biosynthesis. Can also hydrolyze diisopropyl phosphorofluoridate and phenylacetate (in vitro). Calcium-binding protein. Modulates Ca(2+) signaling, and Ca(2+)-dependent cellular processes and enzyme activities. The chain is Regucalcin (RGN) from Oryctolagus cuniculus (Rabbit).